A 238-amino-acid chain; its full sequence is Aspartate/glutamate leucyltransferase (238 aa).

The protein belongs to the R-transferase family. Bpt subfamily.

Its subcellular location is the cytoplasm. The enzyme catalyses N-terminal L-glutamyl-[protein] + L-leucyl-tRNA(Leu) = N-terminal L-leucyl-L-glutamyl-[protein] + tRNA(Leu) + H(+). The catalysed reaction is N-terminal L-aspartyl-[protein] + L-leucyl-tRNA(Leu) = N-terminal L-leucyl-L-aspartyl-[protein] + tRNA(Leu) + H(+). Functions in the N-end rule pathway of protein degradation where it conjugates Leu from its aminoacyl-tRNA to the N-termini of proteins containing an N-terminal aspartate or glutamate. In Shewanella sp. (strain MR-7), this protein is Aspartate/glutamate leucyltransferase.